A 682-amino-acid chain; its full sequence is Potassium-transporting ATPase ATP-binding subunit (682 aa).

The next 4 helical transmembrane spans lie at 34 to 54 (PVMFVVWAGSVLTTLLTLAMV), 58 to 78 (IAGSALFTGIISLWLWFTVLF), 219 to 239 (IALTILLIALTIVFLLATATL), and 254 to 274 (VLVALLVCLIPTTIGGLLSAI). The 4-aspartylphosphate intermediate role is filled by Asp-307. Residues Asp-344, Glu-348, 377-384 (FTAQSRMS), and Lys-395 each bind ATP. Mg(2+) contacts are provided by Asp-518 and Asp-522. The next 3 helical transmembrane spans lie at 588 to 608 (FAIIPAAFAATYPQLNALNVM), 616 to 636 (AILSAVIFNALIIIFLIPLAL), and 662 to 682 (LLVPFIGIKVIDVLLTLLGLA).

This sequence belongs to the cation transport ATPase (P-type) (TC 3.A.3) family. Type IA subfamily. As to quaternary structure, the system is composed of three essential subunits: KdpA, KdpB and KdpC.

Its subcellular location is the cell inner membrane. It carries out the reaction K(+)(out) + ATP + H2O = K(+)(in) + ADP + phosphate + H(+). Its function is as follows. Part of the high-affinity ATP-driven potassium transport (or Kdp) system, which catalyzes the hydrolysis of ATP coupled with the electrogenic transport of potassium into the cytoplasm. This subunit is responsible for energy coupling to the transport system and for the release of the potassium ions to the cytoplasm. The protein is Potassium-transporting ATPase ATP-binding subunit of Salmonella dublin (strain CT_02021853).